Here is a 171-residue protein sequence, read N- to C-terminus: UPF0398 protein MGAS9429_Spy1349 (171 aa).

The protein belongs to the UPF0398 family.

This Streptococcus pyogenes serotype M12 (strain MGAS9429) protein is UPF0398 protein MGAS9429_Spy1349.